A 260-amino-acid chain; its full sequence is Flap endonuclease Xni (260 aa).

Aspartate 105 provides a ligand contact to Mg(2+). A 5'-3' exonuclease domain is found at 164–254 (SQFLDLLALA…LKDFRVNGPA (91 aa)). 5 residues coordinate K(+): leucine 172, alanine 173, proline 181, isoleucine 183, and isoleucine 186. The interaction with DNA stretch occupies residues 185–190 (GIGPKS).

The protein belongs to the Xni family. Mg(2+) is required as a cofactor. The cofactor is K(+).

Has flap endonuclease activity. During DNA replication, flap endonucleases cleave the 5'-overhanging flap structure that is generated by displacement synthesis when DNA polymerase encounters the 5'-end of a downstream Okazaki fragment. The chain is Flap endonuclease Xni from Shewanella sp. (strain ANA-3).